The chain runs to 275 residues: MIGGERVLLGSQKREPSNEEDDQEQLDIDLTSDGKNQRYQPAPNDTISRYHLNHIVYTLRWVIMAFKKLKTKYPPLCLSDSKMDQIAADLIRRLHVLLRREELRSEMSRGRRVSRNLTEAGRNGGLPLGLRRARRAQSAPDRTERIKFYQEMLRFVREPPMISTSLQPSPAESWDHDRFLKDWSQRGEEEETDDTKELCETYGGEVNQDSREEDQQAPAETEVIEVCKPGDGEENAKDDSEQEQAPVVTTEVIEVQSSSGSNSPDDGNEQLRHHM.

2 disordered regions span residues 1–25 (MIGGERVLLGSQKREPSNEEDDQEQ) and 185–275 (QRGE…RHHM). Positions 228-239 (KPGDGEENAKDD) are enriched in basic and acidic residues.

This is an uncharacterized protein from Neurospora crassa (strain ATCC 24698 / 74-OR23-1A / CBS 708.71 / DSM 1257 / FGSC 987).